A 963-amino-acid chain; its full sequence is Bifunctional glutamine synthetase adenylyltransferase/adenylyl-removing enzyme (963 aa).

The segment at 1–451 (MAAPSELQLY…EHFADIIAER (451 aa)) is adenylyl removase. Residues 461–963 (TIEWKALWAG…VAFWEKVFAE (503 aa)) form an adenylyl transferase region.

Belongs to the GlnE family. Requires Mg(2+) as cofactor.

It carries out the reaction [glutamine synthetase]-O(4)-(5'-adenylyl)-L-tyrosine + phosphate = [glutamine synthetase]-L-tyrosine + ADP. The enzyme catalyses [glutamine synthetase]-L-tyrosine + ATP = [glutamine synthetase]-O(4)-(5'-adenylyl)-L-tyrosine + diphosphate. In terms of biological role, involved in the regulation of glutamine synthetase GlnA, a key enzyme in the process to assimilate ammonia. When cellular nitrogen levels are high, the C-terminal adenylyl transferase (AT) inactivates GlnA by covalent transfer of an adenylyl group from ATP to specific tyrosine residue of GlnA, thus reducing its activity. Conversely, when nitrogen levels are low, the N-terminal adenylyl removase (AR) activates GlnA by removing the adenylyl group by phosphorolysis, increasing its activity. The regulatory region of GlnE binds the signal transduction protein PII (GlnB) which indicates the nitrogen status of the cell. In Hahella chejuensis (strain KCTC 2396), this protein is Bifunctional glutamine synthetase adenylyltransferase/adenylyl-removing enzyme.